The following is a 378-amino-acid chain: Cytochrome b (378 aa).

Helical transmembrane passes span 34–54, 78–100, 113–133, and 179–199; these read FGSL…FLSM, WLLR…CHIG, TWNV…VGYV, and FFSF…VHLL. Heme b-binding residues include histidine 84 and histidine 98. 2 residues coordinate heme b: histidine 183 and histidine 197. Histidine 202 serves as a coordination point for a ubiquinone. A run of 4 helical transmembrane segments spans residues 225-245, 289-306, 313-342, and 350-369; these read YSTK…IVVL, LGGV…FCLP, KFRS…WIGM, and IFIG…LNPL.

It belongs to the cytochrome b family. The main subunits of complex b-c1 are: cytochrome b, cytochrome c1 and the Rieske protein. The cofactor is heme b.

It is found in the mitochondrion inner membrane. Functionally, component of the ubiquinol-cytochrome c reductase complex (complex III or cytochrome b-c1 complex) that is part of the mitochondrial respiratory chain. The b-c1 complex mediates electron transfer from ubiquinol to cytochrome c. Contributes to the generation of a proton gradient across the mitochondrial membrane that is then used for ATP synthesis. This is Cytochrome b (mt:Cyt-b) from Loxocorone allax (Goblet worm).